Reading from the N-terminus, the 1966-residue chain is Dedicator of cytokinesis protein 4 (1966 aa).

In terms of domain architecture, SH3 spans 6 to 67 (EHEKYGVVIA…PSSYVHLKNA (62 aa)). Residue Y167 is modified to Phosphotyrosine. T193 carries the post-translational modification Phosphothreonine. The 174-residue stretch at 401 to 574 (RNDLYITIER…ESFCITSFLC (174 aa)) folds into the C2 DOCK-type domain. In terms of domain architecture, DOCKER spans 1190 to 1596 (KTELNKEEMY…LGIQEFSACM (407 aa)). S1599, S1607, S1614, S1618, S1620, and S1631 each carry phosphoserine. Disordered stretches follow at residues 1648 to 1729 (SQAS…IYPT) and 1742 to 1966 (IGDG…VSQL). The segment covering 1672–1703 (PSPSTSSLSSTHSASPNVTSSAPSSARASPLL) has biased composition (low complexity). Phosphoserine is present on S1769. The short motif at 1788 to 1794 (PPVPPRP) is the SH3-binding element. The span at 1795 to 1809 (TQTASPARHTTSVSP) shows a compositional bias: polar residues. Residues 1838-1863 (SNSPVLSGSYSSGISSLSRCSTSETS) are compositionally biased toward low complexity. The span at 1864-1873 (GFENQVNEQS) shows a compositional bias: polar residues. Positions 1941-1954 (SHLENGARRTDPGP) are enriched in basic and acidic residues.

The protein belongs to the DOCK family. Interacts with nucleotide-free Rap1; functions as a guanine nucleotide exchange factor (GEF) for Rap1. Interacts (via DOCKER domain) with RAC1; functions as a guanine nucleotide exchange factor (GEF) for RAC1. Interacts with the SH3 domain of CRK. Interacts with FASLG. Interacts with ELMO2 and EPHA2; mediates activation of RAC1 by EPHA2. Interacts with USH1C (via PDZ 1 domain). Widely expressed at low level. Highly expressed in skeletal muscle, prostate and ovary. As to expression, may be specifically expressed in the brain and eye.

Its subcellular location is the cell membrane. The protein resides in the cell projection. It localises to the cytoplasm. It is found in the cytosol. In terms of biological role, functions as a guanine nucleotide exchange factor (GEF) that promotes the exchange of GDP to GTP, converting inactive GDP-bound small GTPases into their active GTP-bound form. Involved in regulation of adherens junction between cells. Plays a role in cell migration. Functionally, has a higher guanine nucleotide exchange factor activity compared to other isoforms. This is Dedicator of cytokinesis protein 4 (DOCK4) from Homo sapiens (Human).